The sequence spans 234 residues: Glucosamine-6-phosphate deaminase (234 aa).

The active-site Proton acceptor; for enolization step is Asp-62. The active-site For ring-opening step is Asn-128. His-130 functions as the Proton acceptor; for ring-opening step in the catalytic mechanism. The For ring-opening step role is filled by Glu-135.

This sequence belongs to the glucosamine/galactosamine-6-phosphate isomerase family. NagB subfamily.

It carries out the reaction alpha-D-glucosamine 6-phosphate + H2O = beta-D-fructose 6-phosphate + NH4(+). The protein operates within amino-sugar metabolism; N-acetylneuraminate degradation; D-fructose 6-phosphate from N-acetylneuraminate: step 5/5. Catalyzes the reversible isomerization-deamination of glucosamine 6-phosphate (GlcN6P) to form fructose 6-phosphate (Fru6P) and ammonium ion. The sequence is that of Glucosamine-6-phosphate deaminase from Streptococcus uberis (strain ATCC BAA-854 / 0140J).